The primary structure comprises 78 residues: MSTIEERVKKIVAEQLGVKEEEVTIEKSFVDDLGADSLDTVELVMALEEEFETEIPDEEAEKITTVQAAIDYVKAHQA.

Positions 2–77 (STIEERVKKI…AAIDYVKAHQ (76 aa)) constitute a Carrier domain. O-(pantetheine 4'-phosphoryl)serine is present on serine 37.

Belongs to the acyl carrier protein (ACP) family. 4'-phosphopantetheine is transferred from CoA to a specific serine of apo-ACP by AcpS. This modification is essential for activity because fatty acids are bound in thioester linkage to the sulfhydryl of the prosthetic group.

It is found in the cytoplasm. It participates in lipid metabolism; fatty acid biosynthesis. Functionally, carrier of the growing fatty acid chain in fatty acid biosynthesis. This Pseudomonas putida (strain ATCC 700007 / DSM 6899 / JCM 31910 / BCRC 17059 / LMG 24140 / F1) protein is Acyl carrier protein.